The primary structure comprises 218 residues: 7-cyano-7-deazaguanine synthase (218 aa).

10-20 provides a ligand contact to ATP; the sequence is FSGGQDSTTCL. The Zn(2+) site is built by Cys-186, Cys-195, Cys-198, and Cys-201.

Belongs to the QueC family. In terms of assembly, homodimer. Zn(2+) serves as cofactor.

It carries out the reaction 7-carboxy-7-deazaguanine + NH4(+) + ATP = 7-cyano-7-deazaguanine + ADP + phosphate + H2O + H(+). It participates in purine metabolism; 7-cyano-7-deazaguanine biosynthesis. Functionally, catalyzes the ATP-dependent conversion of 7-carboxy-7-deazaguanine (CDG) to 7-cyano-7-deazaguanine (preQ(0)). The protein is 7-cyano-7-deazaguanine synthase of Exiguobacterium sibiricum (strain DSM 17290 / CCUG 55495 / CIP 109462 / JCM 13490 / 255-15).